The primary structure comprises 219 residues: MCRTALIVAGGKGLRMGSELPKQFLPIGGKPVLMRTLEAFHRFDEKMQIILVLPREQQDFWRELCEEHGFDIKHLIADGGETRFHSVKNGLALVNGIGVVGIHDGVRPFVSQEVIARCFLEAVVRKAVIPVIDVVETVRHLTESGSETVSRNDYKLVQTPQVFDADLLKRAYEQEFTPFFTDDASVVEAMGVPVYLVEGNRENIKITTPFDLKVASALL.

Belongs to the IspD/TarI cytidylyltransferase family. IspD subfamily.

The enzyme catalyses 2-C-methyl-D-erythritol 4-phosphate + CTP + H(+) = 4-CDP-2-C-methyl-D-erythritol + diphosphate. The protein operates within isoprenoid biosynthesis; isopentenyl diphosphate biosynthesis via DXP pathway; isopentenyl diphosphate from 1-deoxy-D-xylulose 5-phosphate: step 2/6. In terms of biological role, catalyzes the formation of 4-diphosphocytidyl-2-C-methyl-D-erythritol from CTP and 2-C-methyl-D-erythritol 4-phosphate (MEP). The sequence is that of 2-C-methyl-D-erythritol 4-phosphate cytidylyltransferase from Bacteroides fragilis (strain ATCC 25285 / DSM 2151 / CCUG 4856 / JCM 11019 / LMG 10263 / NCTC 9343 / Onslow / VPI 2553 / EN-2).